The primary structure comprises 517 residues: Probable bifunctional methylthioribulose-1-phosphate dehydratase/enolase-phosphatase E1 (517 aa).

The methylthioribulose-1-phosphate dehydratase stretch occupies residues Met-1–Asp-242. Cys-114 provides a ligand contact to substrate. His-132 and His-134 together coordinate Zn(2+). Glu-157 acts as the Proton donor/acceptor; for methylthioribulose-1-phosphate dehydratase activity in catalysis. Residue His-207 participates in Zn(2+) binding. The segment at Val-278 to Ile-517 is enolase-phosphatase E1. The Mg(2+) site is built by Asp-281 and Glu-283. Residues Ser-416 to Ser-417 and Lys-450 contribute to the substrate site. Residue Asp-476 coordinates Mg(2+).

The protein in the N-terminal section; belongs to the aldolase class II family. MtnB subfamily. In the C-terminal section; belongs to the HAD-like hydrolase superfamily. MasA/MtnC family. Zn(2+) is required as a cofactor. It depends on Mg(2+) as a cofactor.

The enzyme catalyses 5-(methylsulfanyl)-D-ribulose 1-phosphate = 5-methylsulfanyl-2,3-dioxopentyl phosphate + H2O. It catalyses the reaction 5-methylsulfanyl-2,3-dioxopentyl phosphate + H2O = 1,2-dihydroxy-5-(methylsulfanyl)pent-1-en-3-one + phosphate. Its pathway is amino-acid biosynthesis; L-methionine biosynthesis via salvage pathway; L-methionine from S-methyl-5-thio-alpha-D-ribose 1-phosphate: step 2/6. The protein operates within amino-acid biosynthesis; L-methionine biosynthesis via salvage pathway; L-methionine from S-methyl-5-thio-alpha-D-ribose 1-phosphate: step 3/6. It functions in the pathway amino-acid biosynthesis; L-methionine biosynthesis via salvage pathway; L-methionine from S-methyl-5-thio-alpha-D-ribose 1-phosphate: step 4/6. The protein is Probable bifunctional methylthioribulose-1-phosphate dehydratase/enolase-phosphatase E1 of Sorghum bicolor (Sorghum).